The sequence spans 82 residues: M-theraphotoxin-Gr1a (82 aa).

Residues 1-21 (MKTSVVFVIAGLALLSVVCYA) form the signal peptide. A propeptide spanning residues 22–46 (SELKEQSSVNEVLSTIFHFEQPEER) is cleaved from the precursor. 3 cysteine pairs are disulfide-bonded: cysteine 48–cysteine 63, cysteine 55–cysteine 69, and cysteine 62–cysteine 76. Residue phenylalanine 80 is modified to Phenylalanine amide.

The protein belongs to the neurotoxin 10 (Hwtx-1) family. 52 (MTx4) subfamily. As to expression, expressed by the venom gland.

The protein localises to the secreted. Its function is as follows. This cationic hydrophobic peptide acts on a lot of different channels and has an antimicrobial activity. It blocks mechanosensitive ion channels (also named stretch-activated channels or SACs), without having effect on whole-cell voltage-sensitive currents. It also affects acetylcholine receptors (nAChRs) through interactions with membrane lipids by prolonging the closing time without affecting channel conductance or opening activity. It shows high affinity for lipid bilayers. It acts by partitioning into the membrane and perturbing the interface between the channel and the lipid bilayer without necessarily being in physical contact with the channel. It inhibits atrial fibrillation as well as the membrane motor of outer hair cells at low doses. It also binds to the voltage sensor of voltage-gated potassium channels from the archaebacterium Aeropyrum pernix (KvAP) without affecting channel gating. It also shows a low inhibition on a large spectra of sodium channels (Nav1.1/SCN1A, Nav1.2/SCN2A, Nav1.3/SCN3A, Nav1.4/SCN4A, Nav1.5/SCN5A, Nav1.6/SCN8A, Nav1.7/SCN9A) (IC(50)=7.4-14 uM), and potassium channels Kv11.1/KCNH2 and Kv11.2/KCNH6 (IC(50)=11 uM for both). It exhibits antimicrobial activities against the Gram-positive bacteria B.subtilis (MIC=0.5 uM), S.aureus (MIC=2-4 uM), and S.epidermidis (MIC=4-8 uM), and Gram-negative bacteria S.typhimurium (MIC=32.64 uM), P.aeruginosa (MIC=8-16 uM), and E.coli (MIC=8-16 uM). The polypeptide is M-theraphotoxin-Gr1a (Grammostola rosea (Chilean rose tarantula)).